A 1253-amino-acid polypeptide reads, in one-letter code: Cytoplasmic FMR1-interacting protein 2 (1253 aa).

It belongs to the CYFIP family.

It localises to the cytoplasm. Functionally, involved in T-cell adhesion and p53-dependent induction of apoptosis. Does not bind RNA. The protein is Cytoplasmic FMR1-interacting protein 2 (cyfip2) of Xenopus laevis (African clawed frog).